The sequence spans 223 residues: Small ribosomal subunit protein uS3 (223 aa).

The region spanning 39-108 (IRNFVKKNSY…NILINIVEVK (70 aa)) is the KH type-2 domain.

The protein belongs to the universal ribosomal protein uS3 family. Part of the 30S ribosomal subunit. Forms a tight complex with proteins S10 and S14.

Its function is as follows. Binds the lower part of the 30S subunit head. Binds mRNA in the 70S ribosome, positioning it for translation. The sequence is that of Small ribosomal subunit protein uS3 from Clostridium botulinum (strain 657 / Type Ba4).